Reading from the N-terminus, the 388-residue chain is Succinate--CoA ligase [ADP-forming] subunit beta (388 aa).

Residues 9 to 244 enclose the ATP-grasp domain; it reads KQLFARYGLP…QSQEDPREAQ (236 aa). Residues Lys46, 53–55, Glu99, Thr102, and Glu107 each bind ATP; that span reads GRG. Asn199 and Asp213 together coordinate Mg(2+). Substrate is bound by residues Asn264 and 321–323; that span reads GIV.

Belongs to the succinate/malate CoA ligase beta subunit family. As to quaternary structure, heterotetramer of two alpha and two beta subunits. It depends on Mg(2+) as a cofactor.

It carries out the reaction succinate + ATP + CoA = succinyl-CoA + ADP + phosphate. The enzyme catalyses GTP + succinate + CoA = succinyl-CoA + GDP + phosphate. Its pathway is carbohydrate metabolism; tricarboxylic acid cycle; succinate from succinyl-CoA (ligase route): step 1/1. Succinyl-CoA synthetase functions in the citric acid cycle (TCA), coupling the hydrolysis of succinyl-CoA to the synthesis of either ATP or GTP and thus represents the only step of substrate-level phosphorylation in the TCA. The beta subunit provides nucleotide specificity of the enzyme and binds the substrate succinate, while the binding sites for coenzyme A and phosphate are found in the alpha subunit. The sequence is that of Succinate--CoA ligase [ADP-forming] subunit beta from Shigella boydii serotype 18 (strain CDC 3083-94 / BS512).